The following is a 669-amino-acid chain: DNA ligase (669 aa).

NAD(+)-binding positions include 34–38, 83–84, and Glu-114; these read DAEYD and SL. Catalysis depends on Lys-116, which acts as the N6-AMP-lysine intermediate. Residues Arg-137, Glu-171, Lys-287, and Lys-311 each contribute to the NAD(+) site. Zn(2+) contacts are provided by Cys-405, Cys-408, Cys-423, and Cys-428. The BRCT domain maps to 591 to 669; sequence NVESYFAGKT…EERFLQELNK (79 aa).

It belongs to the NAD-dependent DNA ligase family. LigA subfamily. Mg(2+) serves as cofactor. Requires Mn(2+) as cofactor.

The enzyme catalyses NAD(+) + (deoxyribonucleotide)n-3'-hydroxyl + 5'-phospho-(deoxyribonucleotide)m = (deoxyribonucleotide)n+m + AMP + beta-nicotinamide D-nucleotide.. Functionally, DNA ligase that catalyzes the formation of phosphodiester linkages between 5'-phosphoryl and 3'-hydroxyl groups in double-stranded DNA using NAD as a coenzyme and as the energy source for the reaction. It is essential for DNA replication and repair of damaged DNA. In Bacillus cereus (strain ATCC 10987 / NRS 248), this protein is DNA ligase.